Here is a 171-residue protein sequence, read N- to C-terminus: Probable deoxyuridine 5'-triphosphate nucleotidohydrolase (171 aa).

This sequence belongs to the dCTP deaminase family. Archaeal dUTPase subfamily.

The catalysed reaction is dUTP + H2O = dUMP + diphosphate + H(+). Its pathway is pyrimidine metabolism; dUMP biosynthesis; dUMP from dCTP (dUTP route): step 2/2. Functionally, this enzyme is involved in nucleotide metabolism: it produces dUMP, the immediate precursor of thymidine nucleotides and it decreases the intracellular concentration of dUTP so that uracil cannot be incorporated into DNA. The sequence is that of Probable deoxyuridine 5'-triphosphate nucleotidohydrolase from Methanosarcina mazei (strain ATCC BAA-159 / DSM 3647 / Goe1 / Go1 / JCM 11833 / OCM 88) (Methanosarcina frisia).